The primary structure comprises 246 residues: Probable phosphatase Tola_0828 (246 aa).

Residues H8, H10, H16, H41, E74, H102, H132, D193, and H195 each contribute to the Zn(2+) site.

The protein belongs to the PHP family. Zn(2+) serves as cofactor.

The chain is Probable phosphatase Tola_0828 from Tolumonas auensis (strain DSM 9187 / NBRC 110442 / TA 4).